The chain runs to 236 residues: GLIPR1-like protein 1 (236 aa).

An N-terminal signal peptide occupies residues 1–27; it reads MALKKKLNFLWTLVLYLIASRLPKAFG. The SCP domain maps to 46-178; the sequence is LNIHNELRRK…FSAGLFVCNY (133 aa). Asn-126 carries N-linked (GlcNAc...) asparagine glycosylation.

Belongs to the CRISP family. As to quaternary structure, part of a oolemmal binding multimeric complex (IZUMO1 complex) composed at least of IZUMO1 and GLIPR1L1; the complex assemblage is influenced by the maturation status of the male germ cell. Interacts with IZUMO1. Post-translationally, N-glycosylated. N-glycosylation decreases during the transit in the caput. In terms of tissue distribution, expressed in testis (at protein level). Little or no expression in other tissues tested.

The protein resides in the cytoplasmic vesicle. It localises to the secretory vesicle. The protein localises to the acrosome. It is found in the cell membrane. Its subcellular location is the membrane raft. The protein resides in the secreted. In terms of biological role, required for optimal fertilization at the stage of sperm-oocyte fusion, plays a role in optimizing acrosome function, the translocation of IZUMO1 during the acrosome reaction and the fertilization process. Component of epididymosomes, one type of membranous microvesicules which mediate the transfer of lipids and proteins to spermatozoa plasma membrane during epididymal maturation. Also component of the CD9-positive microvesicules found in the cauda region. The polypeptide is GLIPR1-like protein 1 (Mus musculus (Mouse)).